The following is a 384-amino-acid chain: Cytochrome b (384 aa).

Transmembrane regions (helical) follow at residues 32–52 (VGSL…FLAM), 76–98 (WLIR…LHIG), 113–133 (LWVI…MGYC), and 179–199 (FFAL…MHLM). Residues histidine 82 and histidine 96 each coordinate heme b. Heme b contacts are provided by histidine 183 and histidine 197. Histidine 202 provides a ligand contact to a ubiquinone. The next 4 membrane-spanning stretches (helical) occupy residues 225 to 245 (FIFK…LFVF), 289 to 309 (LGGV…PYTD), 321 to 341 (LSKF…NLGQ), and 348 to 368 (YIEL…LIVP).

The protein belongs to the cytochrome b family. In terms of assembly, fungal cytochrome b-c1 complex contains 10 subunits; 3 respiratory subunits, 2 core proteins and 5 low-molecular weight proteins. Cytochrome b-c1 complex is a homodimer. Heme b is required as a cofactor.

It localises to the mitochondrion inner membrane. In terms of biological role, component of the ubiquinol-cytochrome c reductase complex (complex III or cytochrome b-c1 complex) that is part of the mitochondrial respiratory chain. The b-c1 complex mediates electron transfer from ubiquinol to cytochrome c. Contributes to the generation of a proton gradient across the mitochondrial membrane that is then used for ATP synthesis. This Candida parapsilosis (Yeast) protein is Cytochrome b (COB).